Reading from the N-terminus, the 133-residue chain is ATP synthase epsilon chain, chloroplastic (133 aa).

The protein belongs to the ATPase epsilon chain family. In terms of assembly, F-type ATPases have 2 components, CF(1) - the catalytic core - and CF(0) - the membrane proton channel. CF(1) has five subunits: alpha(3), beta(3), gamma(1), delta(1), epsilon(1). CF(0) has three main subunits: a, b and c.

It localises to the plastid. Its subcellular location is the chloroplast thylakoid membrane. In terms of biological role, produces ATP from ADP in the presence of a proton gradient across the membrane. This Nicotiana tomentosiformis (Tobacco) protein is ATP synthase epsilon chain, chloroplastic.